We begin with the raw amino-acid sequence, 436 residues long: MSVKRRDHILIPKNPDAPLPSLKIEEVGECTIDNIYASPEPFVNGMTMKLSAVKNHGIERDSGEVELAGPMEKIFYNPETTKVAIVTCGGLCPGLNNVIRGLVLNLYNRYHVNNIFGLRWGYEGLVPELSEVQRLTPEIVSDIHQKGGSILGTSRGAQSPEVMAQFLIDNNFNILFTLGGDGTLRGANAINKELRRRKVPITVVGIPKTIDNDICYTDSTFGFQTAVGLSQEAINAVHSEAKSAKNGIGIVRLMGRDAGFIALYASLANGDANLVLIPEIDIPITQICEFVGKRIMSKGHVVIVVAEGALQNQKPKDLDLGTDKSGNILHWDSINYLRDSITKYLKSIGIEEHTIKFVDPSYMIRSAPCSAADAHFCMCLANAAVHVAMAGKTGLVICHHHNNFVSVPIDRTSYYIKRVNTDGPLYTMMTAIEKPK.

Residues G90, 155–156 (RG), and 180–183 (GDGT) each bind ATP. D181 contributes to the Mg(2+) binding site. Substrate is bound by residues 209–211 (TID), 254–256 (MGR), E307, and 362–365 (YMIR). The active-site Proton acceptor is the D211.

It belongs to the phosphofructokinase type A (PFKA) family. PPi-dependent PFK group II subfamily. Atypical ATP-dependent clade 'X' sub-subfamily. In terms of assembly, homodimer. Aggregates to a homotetramer after activation by ATP. Mg(2+) serves as cofactor.

The protein resides in the cytoplasm. The enzyme catalyses beta-D-fructose 6-phosphate + ATP = beta-D-fructose 1,6-bisphosphate + ADP + H(+). Its pathway is carbohydrate degradation; glycolysis; D-glyceraldehyde 3-phosphate and glycerone phosphate from D-glucose: step 3/4. Activated by nucleoside triphosphates. Inhibited by phosphoenolpyruvate. EDTA and biphosphonates play the role of inhibitors of kinase activity. Its function is as follows. Catalyzes the phosphorylation of D-fructose 6-phosphate to fructose 1,6-bisphosphate by ATP, the first committing step of glycolysis. This is ATP-dependent 6-phosphofructokinase (PPi-PFK) from Entamoeba histolytica (strain ATCC 30459 / HM-1:IMSS / ABRM).